The following is a 1182-amino-acid chain: MLNPNDADDSDSSTDSSPPVAVPRPKRSATVSPSTRNSFYNSRRRSDANLNFFNERERQRERRRSMVRASRERSESRRASQQNLRKTNSEPNVDMPSIDVEALQKLLLSIPKFVSASRNRINQRHDSDSGGEMTTEIEELKDAAKSIQSLQRVLAYPSQTSSDRGGNRRLADPVESCLESSVFSDVDESSLATDTIEGRRSGISTRLGHPRGVMQFIPSIRNDQFVPTSEIRRNSISRKSSVPDGFMTSEMESEPVPNVRNRRRGIVDEMFSSSTSLLVDRPSETLAGVNRFAKLLDTFRSRPTSPEQHPSISWNPYVYSDGGEALETCGMEDSLHEADILLWKKRSRASLRRHYSVRHLAARELLDTEKSFVEGLEFLVTKYMRPLRQPLECTLIEASLVDKIFYRIPEILAHHQVLLTTLSQRIDQWHKDAILGDVLLAHFSKQSMIETYISFVDNFKFAKASIIQARQKHAFEKYYNRCCRDHPNKLDLDSLLISPIQRVPRYELIVKQMLKHTPVEHEDRERLLRAQRHIHCLAVAINQHKDGSEQMEQRLREIEAIVDGLDDLVTKDRTLLRHDIITLKGTDRERCIFMLSDLLLVTSVKKKPKVLYSKMSSQSMGFLEGNRFKLLFKVALEDVQISKDTLSQLEEVERKLESSREDDRVLKKMSQLCSLLKCERKVLMEMLETMETSNSMSIRELNEQMSSDPDLSAVHLDVLTSNGFEPFVLEFPNAEKRSVFEAMFKDAKATLAKNLLAAPSCSLKTIIAHQTRPGLQLCTATVVPGKRVDSTPSLWVCASDKFSGQVAVMALDTGEITIESCSAIGNAAVTAMCTVPPPMKLRKRKIKSQKSLEHLLNETIMDINSSGSDTESSSDEGTSTAGQTTVWIGNDDGEVFVVNSTERVRSRARDRLARLRNSITSICAANGNVLVATSYSNQVQLLLFRPASDGSWDLENPQTVGHVCQAPITSMQLIGRRVIIASGNWLHAYFVDTGKFQPPVEILPSSDVITLMYVTGQNVFLCGRKSTEVFVVDVFNLSIINHFNVVSFVRSQLSGREHILREHKMGCLRISCLTVARSHLWIGTSAGCVLSTSVQSARSQPTPDLRVCEIGHSGPCRILLPVHTPSHSNHPSRKQKRSSLNVPAQQSSQLMLVSCGEGLDDGTATQDPSTDAINHLIFWKCS.

The span at 1–12 (MLNPNDADDSDS) shows a compositional bias: acidic residues. The interval 1–96 (MLNPNDADDS…TNSEPNVDMP (96 aa)) is disordered. Positions 29 to 41 (ATVSPSTRNSFYN) are enriched in polar residues. A compositionally biased stretch (basic and acidic residues) spans 69-78 (ASRERSESRR). The DH domain occupies 357–544 (VRHLAARELL…HCLAVAINQH (188 aa)). The stretch at 637–669 (EDVQISKDTLSQLEEVERKLESSREDDRVLKKM) forms a coiled coil. The interval 863–884 (INSSGSDTESSSDEGTSTAGQT) is disordered. The span at 865 to 879 (SSGSDTESSSDEGTS) shows a compositional bias: low complexity. Positions 897–922 (VVNSTERVRSRARDRLARLRNSITSI) form a coiled coil.

In terms of tissue distribution, expressed in muscles in the body wall and head, and in the nervous system in neurons including FLP and ASE neurons in the head.

Probable guanine nucleotide exchange factor which regulates the Rho GTPase rho-1. Functions in ASE sensory neurons where it promotes neuronal degeneration under conditions of oxidative stress. In Caenorhabditis elegans, this protein is Rho guanine nucleotide exchange factor osg-1.